The following is a 313-amino-acid chain: Aspartate carbamoyltransferase catalytic subunit (313 aa).

Positions 58 and 59 each coordinate carbamoyl phosphate. Position 86 (Lys-86) interacts with L-aspartate. Carbamoyl phosphate is bound by residues Arg-108, His-136, and Gln-139. Residues Arg-169 and Arg-223 each contribute to the L-aspartate site. Carbamoyl phosphate contacts are provided by Gly-265 and Pro-266.

This sequence belongs to the aspartate/ornithine carbamoyltransferase superfamily. ATCase family. As to quaternary structure, heterododecamer (2C3:3R2) of six catalytic PyrB chains organized as two trimers (C3), and six regulatory PyrI chains organized as three dimers (R2).

It catalyses the reaction carbamoyl phosphate + L-aspartate = N-carbamoyl-L-aspartate + phosphate + H(+). It functions in the pathway pyrimidine metabolism; UMP biosynthesis via de novo pathway; (S)-dihydroorotate from bicarbonate: step 2/3. Its function is as follows. Catalyzes the condensation of carbamoyl phosphate and aspartate to form carbamoyl aspartate and inorganic phosphate, the committed step in the de novo pyrimidine nucleotide biosynthesis pathway. This chain is Aspartate carbamoyltransferase catalytic subunit, found in Anaeromyxobacter dehalogenans (strain 2CP-1 / ATCC BAA-258).